The chain runs to 76 residues: Kappa-actitoxin-Avd4m (76 aa).

A signal peptide spans 1–19; sequence MNKALFLCLVVLCAAVVFA. A propeptide spanning residues 20–31 is cleaved from the precursor; it reads AEDLQKAKHAPF. Intrachain disulfides connect Cys37-Cys72, Cys39-Cys65, and Cys55-Cys73.

The protein belongs to the sea anemone type 3 (BDS) potassium channel toxin family. Weakly expressed in the ectodermal tissue from the distal and proximal tentacles, body wall, and oral disk.

It localises to the secreted. Its subcellular location is the nematocyst. Its function is as follows. Blocks Kv3 voltage-gated potassium channels. Reduces blood pressure. The sequence is that of Kappa-actitoxin-Avd4m from Anemonia viridis (Snakelocks anemone).